Consider the following 873-residue polypeptide: Valine--tRNA ligase (873 aa).

Residues 43-53 (PNVTGVLHMGH) carry the 'HIGH' region motif. Positions 532–536 (KMSKS) match the 'KMSKS' region motif. Lys-535 is an ATP binding site. A coiled-coil region spans residues 802-873 (LGNLINVEEE…IEESIAALTK (72 aa)).

This sequence belongs to the class-I aminoacyl-tRNA synthetase family. ValS type 1 subfamily. As to quaternary structure, monomer.

Its subcellular location is the cytoplasm. It catalyses the reaction tRNA(Val) + L-valine + ATP = L-valyl-tRNA(Val) + AMP + diphosphate. Its function is as follows. Catalyzes the attachment of valine to tRNA(Val). As ValRS can inadvertently accommodate and process structurally similar amino acids such as threonine, to avoid such errors, it has a 'posttransfer' editing activity that hydrolyzes mischarged Thr-tRNA(Val) in a tRNA-dependent manner. This is Valine--tRNA ligase from Parabacteroides distasonis (strain ATCC 8503 / DSM 20701 / CIP 104284 / JCM 5825 / NCTC 11152).